We begin with the raw amino-acid sequence, 1213 residues long: MEGGNAGCSRQLPERAGPAESEPDVFTTFAVRTLLGLTTKLESVTPKEEEAVLKAFQPLHIDVNTQANNRYERNDNDGVDDSENQHCESCTSDQADPMSGSRAEPELEPEPAGQNEILLPHLRSVQTSLSESDNDAILVQGTLVHTTSDTESDGESKDPDADETGTSKCGLNNAALSAVALDGNNQSKEESDSEGYGHSDDTVGRDDTELHPPISQWLPRKLDSILEHDSSGKDRTLMDEQFSCLLATGECSPELSGEDQRPSADNVSFHKAALTERSFQLPAFFSGLRVRKKGLNTEDGETITEIKPRENDLALLKLRQPVKKSNITSGLTTKKKSSEPKASPTFLEQLSHLLNIDVSKNDERTQDSGAGFGETEDSDEGPENKASGQTEPLFPSEEIKSSPAESALDVFKALFTRPPKKETTADPSELEAIKRKMRNEKESLKAVFERSKSKPGDGPSDKSPDLSPSEQDDKTPGRLQTVWPPPKANHEEVKVGLKYTEAEYQAAILHLKREHKEEIETLKSQFELRVFHIRGEHAVSTAQLEETIAHLKNELDNKLNRRNEEARDIGVSTEDDNLPKTYRNVCIQTDRETFIKPSEEENRAVKNNQIVPKKLNISSLTHSISTQGENKDSYDVPSSESVLSCQPKQMLPPSPPPPPPPPPPPPPPPPPFSDSSLPGLVPPPPPLPTGPTSVTPHFAFGPPLPPQLSEGCRDFQAPAPPAPPPLPGLGPPVPPPLPGSGLPPPPPPPGPGLFFNSTLSSSQGPRKPAIEPSRPMKPLYWTRIQLQGSRKTAIPTLWESLEEPDILDTTEFEYLFSKDTTQEKRKPLSETYEKKTKAKKIIKLLDGKRSQTVGILISSLHLEMKDIQQAILCVDDSVVDLETLEALYENRAQKDELEKIEQYYQTSKEEELKLLDKPEQFLYELSQIPNFTERAQCIIFQSVFSEGITSVHRKVDIITRVSKALLNMTSVKEILGLILAFGNYMNGGNRTRGQADGFGLEILPKLKDVKSRDNRINLVDYVVIYYLRHCDKEAGTDKSIFPLPEPQDFFQASQVKFEDLIKDLRKLKRDLEASEKQMKLVCRESSEEHLQPFKEKLEEFFQKAKEERKKEESSLENAQKCFEETVGYFGIKPKPGEKEITPNYVFTVWYEFCSDFKTIWKRESKSISKERIKVAQQSVSKLTAEKKVETKKINPTASLKERLRQKEANVNAN.

Disordered regions lie at residues 1 to 24 (MEGG…SEPD), 66 to 111 (QANN…EPEP), 144 to 169 (VHTT…TSKC), 183 to 216 (GNNQ…PISQ), and 357 to 489 (DVSK…PKAN). Basic and acidic residues-rich tracts occupy residues 187–210 (SKEE…DTEL) and 431–464 (EAIK…DKSP). 2 coiled-coil regions span residues 428-450 (SELE…VFER) and 503-572 (EYQA…IGVS). The tract at residues 624–774 (ISTQGENKDS…PRKPAIEPSR (151 aa)) is disordered. Polar residues predominate over residues 636-647 (VPSSESVLSCQP). Composition is skewed to pro residues over residues 650 to 672 (MLPP…PPPF), 680 to 689 (LVPPPPPLPT), and 718 to 751 (PAPP…PPGP). The region spanning 652–751 (PPSPPPPPPP…LPPPPPPPGP (100 aa)) is the FH1 domain. Residues 755-764 (FNSTLSSSQG) show a composition bias toward polar residues. In terms of domain architecture, FH2 spans 766–1182 (RKPAIEPSRP…KVAQQSVSKL (417 aa)). Positions 1050 to 1125 (FQASQVKFED…ENAQKCFEET (76 aa)) form a coiled coil. The interval 1193–1213 (INPTASLKERLRQKEANVNAN) is disordered.

The protein belongs to the formin homology family. Cappuccino subfamily. As to expression, present in the adult brain, kidney, brain, heart and intestine and throughout the embryo.

It localises to the nucleus. Is important for morphogenesis of limb and kidney and may be involved in determining dorsoventral neural tube polarity and motor neuron induction. It may also have a function in differentiated cells or be involved in maintaining specific differentiated states. This chain is Formin (LD), found in Gallus gallus (Chicken).